The sequence spans 72 residues: uncharacterized protein (72 aa).

Belongs to the ycf76 family.

The protein localises to the plastid. Its subcellular location is the chloroplast. This is an uncharacterized protein from Oryza nivara (Indian wild rice).